The following is an 856-amino-acid chain: Translation initiation factor IF-2 (856 aa).

A tr-type G domain is found at 356-526 (PRAPVVTVMG…LLIADLLELK (171 aa)). The G1 stretch occupies residues 365 to 372 (GHVDHGKT). Residue 365–372 (GHVDHGKT) coordinates GTP. Residues 390–394 (GITQH) form a G2 region. Residues 412 to 415 (DTPG) form a G3 region. Residues 412 to 416 (DTPGH) and 466 to 469 (NKID) each bind GTP. Residues 466–469 (NKID) are G4. The interval 502 to 504 (SAK) is G5.

The protein belongs to the TRAFAC class translation factor GTPase superfamily. Classic translation factor GTPase family. IF-2 subfamily.

It localises to the cytoplasm. Functionally, one of the essential components for the initiation of protein synthesis. Protects formylmethionyl-tRNA from spontaneous hydrolysis and promotes its binding to the 30S ribosomal subunits. Also involved in the hydrolysis of GTP during the formation of the 70S ribosomal complex. The polypeptide is Translation initiation factor IF-2 (Ehrlichia ruminantium (strain Gardel)).